Here is a 493-residue protein sequence, read N- to C-terminus: Probable cytochrome P450 6a13 (493 aa).

C435 is a heme binding site.

This sequence belongs to the cytochrome P450 family. Requires heme as cofactor.

It localises to the endoplasmic reticulum membrane. Its subcellular location is the microsome membrane. In terms of biological role, may be involved in the metabolism of insect hormones and in the breakdown of synthetic insecticides. The polypeptide is Probable cytochrome P450 6a13 (Cyp6a13) (Drosophila melanogaster (Fruit fly)).